Reading from the N-terminus, the 233-residue chain is 7-cyano-7-deazaguanine synthase (233 aa).

7–17 serves as a coordination point for ATP; the sequence is LSGGLDSAVTS. 4 residues coordinate Zn(2+): C195, C206, C209, and C212.

It belongs to the QueC family. Requires Zn(2+) as cofactor.

The catalysed reaction is 7-carboxy-7-deazaguanine + NH4(+) + ATP = 7-cyano-7-deazaguanine + ADP + phosphate + H2O + H(+). It participates in purine metabolism; 7-cyano-7-deazaguanine biosynthesis. Its function is as follows. Catalyzes the ATP-dependent conversion of 7-carboxy-7-deazaguanine (CDG) to 7-cyano-7-deazaguanine (preQ(0)). This chain is 7-cyano-7-deazaguanine synthase, found in Methanococcus maripaludis (strain DSM 14266 / JCM 13030 / NBRC 101832 / S2 / LL).